We begin with the raw amino-acid sequence, 238 residues long: tRNA (guanine-N(1)-)-methyltransferase (238 aa).

S-adenosyl-L-methionine-binding positions include Gly108 and 127-132 (LGDFVL).

The protein belongs to the RNA methyltransferase TrmD family. As to quaternary structure, homodimer.

The protein localises to the cytoplasm. The enzyme catalyses guanosine(37) in tRNA + S-adenosyl-L-methionine = N(1)-methylguanosine(37) in tRNA + S-adenosyl-L-homocysteine + H(+). Functionally, specifically methylates guanosine-37 in various tRNAs. The protein is tRNA (guanine-N(1)-)-methyltransferase of Streptococcus uberis (strain ATCC BAA-854 / 0140J).